Consider the following 311-residue polypeptide: Probable cysteine synthase (311 aa).

Lys45 bears the N6-(pyridoxal phosphate)lysine mark. Pyridoxal 5'-phosphate-binding positions include Asn75, 182 to 186 (GTGGT), and Ser270.

Belongs to the cysteine synthase/cystathionine beta-synthase family. It depends on pyridoxal 5'-phosphate as a cofactor.

The catalysed reaction is O-acetyl-L-serine + hydrogen sulfide = L-cysteine + acetate. Its pathway is amino-acid biosynthesis; L-cysteine biosynthesis; L-cysteine from L-serine: step 2/2. This is Probable cysteine synthase (ytkP) from Bacillus subtilis (strain 168).